The sequence spans 141 residues: Hemoglobin subunit alpha-D (141 aa).

One can recognise a Globin domain in the interval 1-141 (MLTAEDKKLI…VAAVLAEKYR (141 aa)). Residues His-58 and His-87 each contribute to the heme b site.

It belongs to the globin family. As to quaternary structure, heterotetramer of two alpha-D chains and two beta chains. In terms of tissue distribution, red blood cells.

Its function is as follows. Involved in oxygen transport from the lung to the various peripheral tissues. This chain is Hemoglobin subunit alpha-D (HBAD), found in Accipiter gentilis (Northern goshawk).